The primary structure comprises 180 residues: Segregation and condensation protein B (180 aa).

Belongs to the ScpB family. As to quaternary structure, homodimer. Homodimerization may be required to stabilize the binding of ScpA to the Smc head domains. Component of a cohesin-like complex composed of ScpA, ScpB and the Smc homodimer, in which ScpA and ScpB bind to the head domain of Smc. The presence of the three proteins is required for the association of the complex with DNA.

Its subcellular location is the cytoplasm. Participates in chromosomal partition during cell division. May act via the formation of a condensin-like complex containing Smc and ScpA that pull DNA away from mid-cell into both cell halves. This Staphylococcus epidermidis (strain ATCC 35984 / DSM 28319 / BCRC 17069 / CCUG 31568 / BM 3577 / RP62A) protein is Segregation and condensation protein B.